A 638-amino-acid chain; its full sequence is Homeobox protein 10 (638 aa).

Disordered regions lie at residues 23–55 (ETQP…LNTN), 76–139 (TDEN…VNTN), and 195–219 (IANE…EEAK). Composition is skewed to low complexity over residues 24–55 (TQPT…LNTN) and 80–139 (NTSV…VNTN). Residues 205–214 (EPQTNSNVNG) are compositionally biased toward polar residues. Residues 301–360 (NKKKRQRTSPEQLAILEQIFETDKMPSQQIRVRLANQLGMSSRRVQIWFQNKRAKVKRGG) constitute a DNA-binding region (homeobox). 2 disordered regions span residues 381 to 431 (EDED…TSSD) and 448 to 638 (SSSS…IVKN). Composition is skewed to low complexity over residues 388 to 411 (SLTI…NNNG), 419 to 430 (LSSSPTNLNTSS), and 462 to 501 (NNTN…TTTT). 2 stretches are compositionally biased toward polar residues: residues 502 to 522 (SSSP…NKLT) and 545 to 573 (SLNS…TDKQ). Low complexity predominate over residues 575–625 (NSDFSNFNNNNNNNNNNNNNNNNNNNINNNGNNNSNNNDSNNNNNKSNFSD).

It localises to the nucleus. Functionally, putative transcription factor. This chain is Homeobox protein 10 (hbx10), found in Dictyostelium discoideum (Social amoeba).